Here is a 470-residue protein sequence, read N- to C-terminus: ESX-4 secretion system ATPase EccB4 (470 aa).

Residues 44–64 (LALGCVLAIVAAMGCAFVALL) traverse the membrane as a helical segment.

It belongs to the EccB family. In terms of assembly, part of the ESX-4 / type VII secretion system (T7SS), which is composed of cytosolic and membrane components.

The protein localises to the cell membrane. Functionally, an ATPase. The chain is ESX-4 secretion system ATPase EccB4 (eccB4) from Mycobacterium tuberculosis (strain CDC 1551 / Oshkosh).